The chain runs to 356 residues: MGANLTSPLPHHHRTQTTSVCNHLFSPGDGGPTFAPQRDSNTSSRSSSNAKESVLMQGWNWSKRNIQPVMSRRSLPKSGSSSEATSSKSSDSLVSFTRNVSTSTSSQYGKISISLDRNQNYKSVPRPSDTTTIIPNYYSLREEFRRGLQINTRQDLVNNNLASNDLSVIGSPKHVPRPRSVLRDDNANCDISPIAEQENVPSEASTSELLRGLGIFISNNCDVSDFDPAHLVTWLRSVDRSLLLQGWQDIAFINPANLVFIFLLVRDVLPDERHLIHTLEELHAWILSCLYVSYSYMGNEISYPLKPFLIGNDRNTFWNRCVAMVTSHSRQMLLLNSSSTFFSEVFTDLKHCSSSE.

2 disordered regions span residues 1 to 53 (MGAN…AKES) and 66 to 99 (IQPV…FTRN). Low complexity-rich tracts occupy residues 40–49 (SNTSSRSSSN) and 71–92 (SRRS…SSDS).

This sequence belongs to the cyclin-dependent kinase 5 activator family. Heterodimer composed of a catalytic subunit cdk-5 and a regulatory subunit cdka-1. Interaction with cdka-1 is required for cdk-5 activation. In terms of tissue distribution, expressed in all classes of neurons in the ventral cord.

Its subcellular location is the cytoplasm. It localises to the cell projection. The protein localises to the dendrite. The protein resides in the axon. Activator of the kinase cdk-5. In several motor neurons, promotes the polarized trafficking of synaptic vesicles and dense-core vesicles. In the ventral nerve cord, regulates the synaptic localization of the glutamate receptor, glr-1. In DA motor neurons, regulates axonal transport of synaptic vesicle precursors by inhibiting dynein-mediated retrograde transport. Regulates the polarized distribution of dense-core vesicles in DB motor neurons. May regulate these processes in association with cdk-5. May also play a role in GABAergic synaptic vesicle localization in the ventral nerve cord. This chain is Cyclin-dependent kinase 5 activator 1, found in Caenorhabditis elegans.